The chain runs to 568 residues: MARVEL domain-containing protein 2 (568 aa).

Disordered stretches follow at residues 1–72 (MSGG…YPSD) and 116–163 (SGGV…SYNS). Residues 1-211 (MSGGGSSSGP…YMKSWAGLLR (211 aa)) lie on the Cytoplasmic side of the membrane. Residues 29-46 (ADPRHPETNLETLHDRDL) are compositionally biased toward basic and acidic residues. A compositionally biased stretch (pro residues) spans 52–62 (PLPPPPLPLHP). Positions 205–379 (SWAGLLRILC…SAMVSLKLWR (175 aa)) constitute an MARVEL domain. Residues 212 to 232 (ILCIVELLLGAAVFACVTAYI) form a helical membrane-spanning segment. Residues 233–266 (HKDNEWYNMFGYSQPYGYTASMQGGYYYSGPKTP) are Extracellular-facing. Residues 267–287 (FVLVVAGLAWIVTIILLVLGM) traverse the membrane as a helical segment. The Cytoplasmic segment spans residues 288–303 (SMYYRTILLDSTWWPL). A helical membrane pass occupies residues 304–324 (TEFGINISLFILYMAGAIVYV). The Extracellular segment spans residues 325 to 354 (NDTNRGGLCYYQLFNTPVNASFCRVEGGQT). The helical transmembrane segment at 355–375 (AAIIFLFVSMLMYFISAMVSL) threads the bilayer. The Cytoplasmic portion of the chain corresponds to 376–568 (KLWRHESARK…KVMDWNDGYN (193 aa)). The OCEL domain maps to 451-562 (PDYVAKYQAI…RIQEYDKVMD (112 aa)). A coiled-coil region spans residues 462–559 (AEDERERYKA…IKQRIQEYDK (98 aa)).

Belongs to the ELL/occludin family.

It is found in the cell membrane. The protein resides in the cell junction. It localises to the tight junction. In terms of biological role, may play a role in the formation of the epithelial barrier. This chain is MARVEL domain-containing protein 2 (marveld2), found in Xenopus tropicalis (Western clawed frog).